The primary structure comprises 224 residues: Large ribosomal subunit protein uL1 (224 aa).

It belongs to the universal ribosomal protein uL1 family. As to quaternary structure, part of the 50S ribosomal subunit.

Its function is as follows. Binds directly to 23S rRNA. The L1 stalk is quite mobile in the ribosome, and is involved in E site tRNA release. In terms of biological role, protein L1 is also a translational repressor protein, it controls the translation of the L11 operon by binding to its mRNA. This is Large ribosomal subunit protein uL1 from Borrelia hermsii (strain HS1 / DAH).